Here is an 83-residue protein sequence, read N- to C-terminus: Small ribosomal subunit protein uS17 (83 aa).

This sequence belongs to the universal ribosomal protein uS17 family. Part of the 30S ribosomal subunit.

Functionally, one of the primary rRNA binding proteins, it binds specifically to the 5'-end of 16S ribosomal RNA. This Campylobacter hominis (strain ATCC BAA-381 / DSM 21671 / CCUG 45161 / LMG 19568 / NCTC 13146 / CH001A) protein is Small ribosomal subunit protein uS17.